The chain runs to 432 residues: Selenocysteine lyase (432 aa).

M1 is subject to N-acetylmethionine. The disordered stretch occupies residues M1–V20. A Phosphoserine modification is found at S117. Position 247 is an N6-(pyridoxal phosphate)lysine (K247). The S-selanylcysteine intermediate role is filled by C375.

This sequence belongs to the class-V pyridoxal-phosphate-dependent aminotransferase family. As to quaternary structure, homodimer. Requires pyridoxal 5'-phosphate as cofactor.

Its subcellular location is the cytoplasm. It localises to the cytosol. It catalyses the reaction L-selenocysteine + AH2 = hydrogenselenide + L-alanine + A + H(+). Its function is as follows. Catalyzes the decomposition of L-selenocysteine to L-alanine and elemental selenium. This chain is Selenocysteine lyase (Scly), found in Rattus norvegicus (Rat).